The chain runs to 673 residues: Sodium/myo-inositol cotransporter 2 (673 aa).

At 1 to 27 the chain is on the extracellular side; the sequence is MESATISPQPPQSDSLEAFPQKSMEPA. Residues 28–48 form a helical membrane-spanning segment; sequence DIAVLVLYFLFVLAVGLWSTV. The Cytoplasmic segment spans residues 49–65; sequence RTKRDTVKGYFLAGGDM. A helical membrane pass occupies residues 66-88; that stretch reads VWWPVGASLFASNVGSGHFIGLA. Residues 89 to 102 lie on the Extracellular side of the membrane; it reads GSGAAVGISVAAYE. Residues 103–123 traverse the membrane as a helical segment; the sequence is LNGLFSVLMLAWVFLPIYIAG. The Cytoplasmic portion of the chain corresponds to 124–148; the sequence is QVTTMPEYLRRRFGGNRISITLAVL. The helical transmembrane segment at 149–169 threads the bilayer; the sequence is YLFIYIFTKISVDMYAGAIFI. Over 170-180 the chain is Extracellular; that stretch reads QQSLHLDLYLA. A helical transmembrane segment spans residues 181–201; the sequence is IVGLLAITALYTVAGGLAAVI. The Cytoplasmic segment spans residues 202–208; sequence YTDALQT. Residues 209-229 form a helical membrane-spanning segment; the sequence is VIMLIGAFILMGYSFAAVGGM. Residues 230-272 are Extracellular-facing; sequence EGLKDQYFLALASNRSENSSCGLPREDAFHIFRDPLTSDLPWP. Residues 273–293 form a helical membrane-spanning segment; that stretch reads GILFGMSIPSLWYWCTDQVIV. Residues 294 to 308 are Cytoplasmic-facing; that stretch reads QRSLAAKNLSHAKGG. A helical transmembrane segment spans residues 309–329; that stretch reads SLMAAYLKVLPLFLMVFPGMV. At 330–375 the chain is on the extracellular side; that stretch reads SRVLFPDQVACAHPDICQRVCSNPSGCSDIAYPKLVLELLPTGLRG. A helical membrane pass occupies residues 376–396; sequence LMMAVMVAALMSSLTSIFNSA. Residues 397–418 are Cytoplasmic-facing; sequence STIFTMDLWNHIRPRASERELM. The helical transmembrane segment at 419–439 threads the bilayer; sequence IVGRIFVFALVLVSILWIPIV. Residues 440–446 are Extracellular-facing; it reads QASQGGQ. Residues 447-467 form a helical membrane-spanning segment; that stretch reads LFIYIQSISSYLQPPVAMVFI. Residues 468–479 are Cytoplasmic-facing; sequence MGCFWKRTNEKG. Residues 480–500 form a helical membrane-spanning segment; the sequence is AFSGLILGLLLGLVRLILDFV. Residues 501-521 are Extracellular-facing; that stretch reads YAQPRCDQPDDRPAVVKDVHY. Residues 522–542 traverse the membrane as a helical segment; sequence LYFSMILSFTTLITVVTVSWF. Topologically, residues 543 to 652 are cytoplasmic; the sequence is TETPSKEMVS…SLEENPLVKT (110 aa). The chain crosses the membrane as a helical span at residues 653–673; the sequence is LLDVNCIVCISCAIFLWGYFA.

It belongs to the sodium:solute symporter (SSF) (TC 2.A.21) family.

It is found in the membrane. The protein localises to the apical cell membrane. The catalysed reaction is myo-inositol(out) + 2 Na(+)(out) = myo-inositol(in) + 2 Na(+)(in). It carries out the reaction 1D-chiro-inositol(out) + 2 Na(+)(out) = 1D-chiro-inositol(in) + 2 Na(+)(in). The enzyme catalyses D-glucose(out) + 2 Na(+)(out) = D-glucose(in) + 2 Na(+)(in). It catalyses the reaction D-xylose(out) + 2 Na(+)(out) = D-xylose(in) + 2 Na(+)(in). Its activity is regulated as follows. MI transport activity inhibited by D-chiro-inositol (DCI), phlorizin (Pz) and sodium (Na(+)). Insulin increases D-chiro-inositol uptake. Functionally, involved in the sodium-dependent cotransport of myo-inositol (MI) with a Na(+):MI stoichiometry of 2:1. Exclusively responsible for apical MI transport and absorption in intestine. Can also transport D-chiro-inositol (DCI) but not L-fucose. Exhibits stereospecific cotransport of both D-glucose and D-xylose. May induce apoptosis through the TNF-alpha, PDCD1 pathway. May play a role in the regulation of MI concentration in serum, involving reabsorption in at least the proximal tubule of the kidney. In Mus musculus (Mouse), this protein is Sodium/myo-inositol cotransporter 2.